Consider the following 226-residue polypeptide: Phosphoribosylformylglycinamidine synthase subunit PurQ (226 aa).

Residues Lys2–Ala226 form the Glutamine amidotransferase type-1 domain. Cys86 (nucleophile) is an active-site residue. Catalysis depends on residues His195 and Glu197.

In terms of assembly, part of the FGAM synthase complex composed of 1 PurL, 1 PurQ and 2 PurS subunits.

The protein resides in the cytoplasm. It carries out the reaction N(2)-formyl-N(1)-(5-phospho-beta-D-ribosyl)glycinamide + L-glutamine + ATP + H2O = 2-formamido-N(1)-(5-O-phospho-beta-D-ribosyl)acetamidine + L-glutamate + ADP + phosphate + H(+). The enzyme catalyses L-glutamine + H2O = L-glutamate + NH4(+). The protein operates within purine metabolism; IMP biosynthesis via de novo pathway; 5-amino-1-(5-phospho-D-ribosyl)imidazole from N(2)-formyl-N(1)-(5-phospho-D-ribosyl)glycinamide: step 1/2. Part of the phosphoribosylformylglycinamidine synthase complex involved in the purines biosynthetic pathway. Catalyzes the ATP-dependent conversion of formylglycinamide ribonucleotide (FGAR) and glutamine to yield formylglycinamidine ribonucleotide (FGAM) and glutamate. The FGAM synthase complex is composed of three subunits. PurQ produces an ammonia molecule by converting glutamine to glutamate. PurL transfers the ammonia molecule to FGAR to form FGAM in an ATP-dependent manner. PurS interacts with PurQ and PurL and is thought to assist in the transfer of the ammonia molecule from PurQ to PurL. This is Phosphoribosylformylglycinamidine synthase subunit PurQ from Limosilactobacillus reuteri (strain DSM 20016) (Lactobacillus reuteri).